The primary structure comprises 116 residues: uncharacterized protein (116 aa).

Helical transmembrane passes span 5 to 27 (AILL…AVPC), 42 to 64 (PFVP…TAGV), and 88 to 110 (VLHG…VVAI).

The protein resides in the cell membrane. This is an uncharacterized protein from Archaeoglobus fulgidus (strain ATCC 49558 / DSM 4304 / JCM 9628 / NBRC 100126 / VC-16).